The primary structure comprises 523 residues: Inosine-5'-monophosphate dehydrogenase 2 (523 aa).

CBS domains follow at residues 121–183 (FINN…VQDV) and 184–240 (MTKN…PLAS). NAD(+) contacts are provided by residues 278 to 280 (DSS) and 328 to 330 (GMG). K(+) is bound by residues Gly330 and Gly332. Ser333 serves as a coordination point for IMP. Cys335 is a binding site for K(+). Cys335 serves as the catalytic Thioimidate intermediate. Residues 368–370 (DGG), 391–392 (GG), and 415–419 (YRGMG) contribute to the IMP site. Catalysis depends on Arg437, which acts as the Proton acceptor. Position 449 (Gln449) interacts with IMP. The K(+) site is built by Glu508, Gly509, and Gly510.

The protein belongs to the IMPDH/GMPR family. In terms of assembly, homotetramer. Seems to be able to form heterotetramers composed from more than 1 of the 3 IMPDH gene products (IMD2-4). The cofactor is K(+).

It localises to the cytoplasm. It catalyses the reaction IMP + NAD(+) + H2O = XMP + NADH + H(+). It participates in purine metabolism; XMP biosynthesis via de novo pathway; XMP from IMP: step 1/1. Its activity is regulated as follows. Mycophenolic acid (MPA) is a non-competitive inhibitor that prevents formation of the closed enzyme conformation by binding to the same site as the amobile flap. In contrast, mizoribine monophosphate (MZP) is a competitive inhibitor that induces the closed conformation. MPA is a potent inhibitor of mammalian IMPDHs but a poor inhibitor of the bacterial enzymes. MZP is a more potent inhibitor of bacterial IMPDH. In terms of biological role, catalyzes the conversion of inosine 5'-phosphate (IMP) to xanthosine 5'-phosphate (XMP), the first committed and rate-limiting step in the de novo synthesis of guanine nucleotides, and therefore plays an important role in the regulation of cell growth. In contrast to the other IMPDH alleles IMD3 and IMD4, the enzymatic activity of IMD2 seems to be intrinsically drug resistant. This Saccharomyces cerevisiae (strain ATCC 204508 / S288c) (Baker's yeast) protein is Inosine-5'-monophosphate dehydrogenase 2.